The following is a 1155-amino-acid chain: DNA mismatch repair protein MLH3 (1155 aa).

The protein belongs to the DNA mismatch repair MutL/HexB family. In terms of assembly, heterodimer of MLH1 and MLH3, called MutLbeta, which is involved in correction of a specific subset of IDLs when associated with MutSbeta. In terms of tissue distribution, expressed in reproductive tissues.

The protein localises to the nucleus. In terms of biological role, involved in DNA mismatch repair (MMR), correcting insertion-deletion loops (IDLs) resulting from DNA replication, DNA damage or from recombination events between non-identical sequences during meiosis. Component of the MutLbeta heterodimer, which probably forms a ternary complex with the MutSbeta heterodimer that initially recognizes the DNA mismatches. This complex is thought to be responsible for directing the downstream MMR events, including strand discrimination, excision, and resynthesis. Plays a major role in promoting meiotic crossing-over and is involved in maintaining the genetic stability of simple sequence repeats by correction of frameshift intermediates. In Arabidopsis thaliana (Mouse-ear cress), this protein is DNA mismatch repair protein MLH3 (MLH3).